The chain runs to 64 residues: Transcription factor P13 (64 aa).

In terms of biological role, transcription factor that regulates expression of phage structural components with protein P14. This is Transcription factor P13 from Pseudoalteromonas phage PM2 (Bacteriophage PM2).